The following is a 356-amino-acid chain: Guanine nucleotide-binding protein alpha-2 subunit (356 aa).

Glycine 2 carries the N-myristoyl glycine lipid modification. Residue cysteine 4 is the site of S-palmitoyl cysteine attachment. The G-alpha domain occupies 35 to 356 (REVKLLLLGA…LTNNLRDIVL (322 aa)). The interval 38 to 51 (KLLLLGAGESGKST) is G1 motif. GTP-binding residues include glutamate 46, serine 47, glycine 48, lysine 49, serine 50, threonine 51, aspartate 153, leucine 178, threonine 184, glycine 206, asparagine 272, lysine 273, aspartate 275, and alanine 329. Residue serine 50 coordinates Mg(2+). Residues 176-184 (DILRCRNKT) are G2 motif. Mg(2+) is bound at residue threonine 184. Residues 199 to 208 (YRIFDVGGQR) are G3 motif. A G4 motif region spans residues 268 to 275 (ILFLNKVD). The interval 327 to 332 (TNATDV) is G5 motif.

Belongs to the G-alpha family. G proteins are composed of 3 units; alpha, beta and gamma. The alpha chain contains the guanine nucleotide binding site. Mg(2+) is required as a cofactor.

In terms of biological role, guanine nucleotide-binding proteins (G proteins) are involved as modulators or transducers in various transmembrane signaling systems. In Mycosarcoma maydis (Corn smut fungus), this protein is Guanine nucleotide-binding protein alpha-2 subunit (GPA2).